An 886-amino-acid polypeptide reads, in one-letter code: Protein translocase subunit SecA (886 aa).

ATP-binding positions include Gln-85, 103–107, and Asp-492; that span reads GEGKT. The segment covering 841–864 has biased composition (basic and acidic residues); that stretch reads RVVENRYAEEGPKQPARRENKVGR. The segment at 841–866 is disordered; sequence RVVENRYAEEGPKQPARRENKVGRND. Positions 868, 870, 879, and 880 each coordinate Zn(2+).

It belongs to the SecA family. Monomer and homodimer. Part of the essential Sec protein translocation apparatus which comprises SecA, SecYEG and auxiliary proteins SecDF. Other proteins may also be involved. Zn(2+) serves as cofactor.

It is found in the cell membrane. The protein resides in the cytoplasm. The enzyme catalyses ATP + H2O + cellular proteinSide 1 = ADP + phosphate + cellular proteinSide 2.. Its function is as follows. Part of the Sec protein translocase complex. Interacts with the SecYEG preprotein conducting channel. Has a central role in coupling the hydrolysis of ATP to the transfer of proteins into and across the cell membrane, serving as an ATP-driven molecular motor driving the stepwise translocation of polypeptide chains across the membrane. This chain is Protein translocase subunit SecA, found in Pelotomaculum thermopropionicum (strain DSM 13744 / JCM 10971 / SI).